A 500-amino-acid polypeptide reads, in one-letter code: Probable cardiolipin synthase YwiE (500 aa).

3 helical membrane passes run 6–26 (LEFFFLYMMLIGAYVIWFFPV), 31–51 (FYGGLLCYISIILFSIYSLIL), and 59–79 (TLLWIHILVFFPIVGYVFYLF). PLD phosphodiesterase domains are found at residues 237 to 264 (LNFRNHRKIVIIDGKTGFVGGLNVGKEY) and 413 to 440 (QKGFMHQKVMIIDGDLASVGTANMDMRS). Catalysis depends on residues H242, K244, D249, H418, K420, and D425.

This sequence belongs to the phospholipase D family. Cardiolipin synthase subfamily.

Its subcellular location is the cell membrane. It carries out the reaction 2 a 1,2-diacyl-sn-glycero-3-phospho-(1'-sn-glycerol) = a cardiolipin + glycerol. Functionally, catalyzes the reversible phosphatidyl group transfer from one phosphatidylglycerol molecule to another to form cardiolipin (CL) (diphosphatidylglycerol) and glycerol. May have a role in the heat shock response since the level of the transcript of ywiE increases after a heat shock. This chain is Probable cardiolipin synthase YwiE (ywiE), found in Bacillus subtilis (strain 168).